A 238-amino-acid chain; its full sequence is Probable transcriptional regulatory protein SSU05_0402 (238 aa).

It belongs to the TACO1 family. YeeN subfamily.

The protein localises to the cytoplasm. This is Probable transcriptional regulatory protein SSU05_0402 from Streptococcus suis (strain 05ZYH33).